Here is a 473-residue protein sequence, read N- to C-terminus: Photosystem II CP43 reaction center protein (473 aa).

A propeptide spanning residues 1-14 (MKTLYSLRRFYPVE) is cleaved from the precursor. An N-acetylthreonine modification is found at T15. T15 carries the phosphothreonine modification. A run of 5 helical transmembrane segments spans residues 69-93 (LFEVAHFVPEKPMYEQGLILLPHLA), 134-155 (LLGPETLEESFPFFGYVWKDRN), 178-200 (KALYFGGVYDTWAPGGGDVRKIT), 255-275 (KPFAWARRAFVWSGEAYLSYS), and 291-312 (WFNNTAYPSEFYGPTGPEASQA). [CaMn4O5] cluster is bound at residue E367. A helical transmembrane segment spans residues 447–471 (RARAAAAGFEKGIDRDFEPVLSMTP).

This sequence belongs to the PsbB/PsbC family. PsbC subfamily. PSII is composed of 1 copy each of membrane proteins PsbA, PsbB, PsbC, PsbD, PsbE, PsbF, PsbH, PsbI, PsbJ, PsbK, PsbL, PsbM, PsbT, PsbX, PsbY, PsbZ, Psb30/Ycf12, at least 3 peripheral proteins of the oxygen-evolving complex and a large number of cofactors. It forms dimeric complexes. Requires Binds multiple chlorophylls and provides some of the ligands for the Ca-4Mn-5O cluster of the oxygen-evolving complex. It may also provide a ligand for a Cl- that is required for oxygen evolution. PSII binds additional chlorophylls, carotenoids and specific lipids. as cofactor.

It localises to the plastid. The protein localises to the chloroplast thylakoid membrane. Its function is as follows. One of the components of the core complex of photosystem II (PSII). It binds chlorophyll and helps catalyze the primary light-induced photochemical processes of PSII. PSII is a light-driven water:plastoquinone oxidoreductase, using light energy to abstract electrons from H(2)O, generating O(2) and a proton gradient subsequently used for ATP formation. The chain is Photosystem II CP43 reaction center protein from Piper cenocladum (Ant piper).